Here is a 364-residue protein sequence, read N- to C-terminus: Uroporphyrinogen decarboxylase (364 aa).

Residues 28–32 (RQAGR), phenylalanine 47, aspartate 78, tyrosine 158, threonine 213, and histidine 334 each bind substrate.

This sequence belongs to the uroporphyrinogen decarboxylase family. As to quaternary structure, homodimer.

It localises to the cytoplasm. The enzyme catalyses uroporphyrinogen III + 4 H(+) = coproporphyrinogen III + 4 CO2. The protein operates within porphyrin-containing compound metabolism; protoporphyrin-IX biosynthesis; coproporphyrinogen-III from 5-aminolevulinate: step 4/4. In terms of biological role, catalyzes the decarboxylation of four acetate groups of uroporphyrinogen-III to yield coproporphyrinogen-III. This is Uroporphyrinogen decarboxylase from Ralstonia nicotianae (strain ATCC BAA-1114 / GMI1000) (Ralstonia solanacearum).